Here is a 209-residue protein sequence, read N- to C-terminus: MALNGEYAHVAFDELRAPLNKGKWRSDVFKADAAMPLDVEVGTGNGTYFAHHAKTHSDRLLVGLELKYKPLIQSIRRAVNAGCKNAAITRFHAFNIDHLFAEGEIDNVYIHFPDPWTSPKKPKNRFVCKENLELLFRLQKPGSFINFKTDSLVYFLWAMDEIRQSPYKIIFETQDLHNSDMKDQNFETAFEKIFLREGIKINFVRLQKI.

S-adenosyl-L-methionine is bound by residues E40, E65, and D114. Residue D114 is part of the active site. Substrate is bound by residues D150 and 188–191 (TAFE).

It belongs to the class I-like SAM-binding methyltransferase superfamily. TrmB family.

It carries out the reaction guanosine(46) in tRNA + S-adenosyl-L-methionine = N(7)-methylguanosine(46) in tRNA + S-adenosyl-L-homocysteine. It functions in the pathway tRNA modification; N(7)-methylguanine-tRNA biosynthesis. In terms of biological role, catalyzes the formation of N(7)-methylguanine at position 46 (m7G46) in tRNA. In Bdellovibrio bacteriovorus (strain ATCC 15356 / DSM 50701 / NCIMB 9529 / HD100), this protein is tRNA (guanine-N(7)-)-methyltransferase.